The chain runs to 329 residues: Mas-related G-protein coupled receptor member X2 (329 aa).

The Extracellular segment spans residues 1 to 33 (MDPTTPAWGTESTTMNGNDQALPLFCGKETLIS). A helical membrane pass occupies residues 34 to 54 (VFLILFIALVGLVGNGFVLWL). The Cytoplasmic segment spans residues 55–63 (LGFRMRKNA). The helical transmembrane segment at 64–84 (FSVYVLSLAGADFLFLCFQII) threads the bilayer. Over 85–96 (NCLVYLSNVFCS) the chain is Extracellular. Residues 97-117 (ISINFPSFFITVMTCAYLAGL) traverse the membrane as a helical segment. Residues 118-144 (SMLSTISTERCLSVLWPIWYRCRRPRH) are Cytoplasmic-facing. The chain crosses the membrane as a helical span at residues 145–165 (LSAVACVLLWALSLLLSILEG). The Extracellular segment spans residues 166 to 183 (KFCGLFGDGDSGWCQTFD). Residues 184–204 (LITAAWLIFLFMVLCGSSLAL) traverse the membrane as a helical segment. The Cytoplasmic segment spans residues 205–227 (LVRILCGSRGLPLTRLYLTILLT). Residues 228-248 (VLVFLLCGLPFGIQWFLILWI) traverse the membrane as a helical segment. The Extracellular portion of the chain corresponds to 249–263 (WKNSDVLFCHIHPVS). The helical transmembrane segment at 264–284 (VVLSSLNSSANPIIYFFVGSF) threads the bilayer. Residues 285–329 (RKQWRLQQPILKLALQRALQDIAEVDHSEGCFRQGTPEMSRSSLV) are Cytoplasmic-facing.

This sequence belongs to the G-protein coupled receptor 1 family. Mas subfamily.

It localises to the cell membrane. Mast cell-specific receptor for basic secretagogues, i.e. cationic amphiphilic drugs, as well as endo- or exogenous peptides, consisting of a basic head group and a hydrophobic core. Recognizes and binds small molecules containing a cyclized tetrahydroisoquinoline (THIQ), such as non-steroidal neuromuscular blocking drugs (NMBDs), including tubocurarine and atracurium. In response to these compounds, mediates pseudo-allergic reactions characterized by histamine release, inflammation and airway contraction. This Pan troglodytes (Chimpanzee) protein is Mas-related G-protein coupled receptor member X2 (MRGPRX2).